Consider the following 264-residue polypeptide: H-2 class II histocompatibility antigen, I-A beta chain (264 aa).

Residues 1–31 (MVWLPRVPCVAAVILLLTVLSPPVALVRDSR) form the signal peptide. The segment at 32 to 121 (PWFLEYCKSE…IFDNFLVPRR (90 aa)) is beta-1. Over 32-225 (PWFLEYCKSE…KAQSTSAQNK (194 aa)) the chain is Extracellular. 2 cysteine pairs are disulfide-bonded: Cys-42–Cys-106 and Cys-144–Cys-200. N-linked (GlcNAc...) asparagine glycosylation occurs at Asn-46. Positions 122-215 (VEPTVTVYPT…SLTDPVTVEW (94 aa)) are beta-2. Positions 124 to 214 (PTVTVYPTKT…PSLTDPVTVE (91 aa)) constitute an Ig-like C1-type domain. Residues 216 to 225 (KAQSTSAQNK) form a connecting peptide region. A helical transmembrane segment spans residues 226–248 (MLSGVGGFVLGLLFLRAGLFIYF). The Cytoplasmic segment spans residues 249-264 (RNQKGQSGLQPTGLLS).

This sequence belongs to the MHC class II family. Post-translationally, ubiquitinated in immature dendritic cells leading to down-regulation of MHC class II.

The protein localises to the membrane. The chain is H-2 class II histocompatibility antigen, I-A beta chain (H2-Eb1) from Mus musculus (Mouse).